We begin with the raw amino-acid sequence, 343 residues long: DNA polymerase III subunit delta (343 aa).

Domain stretches follow at residues 1–140 (MIRL…VTCQ), 141–210 (TPEQ…NDAA), and 211–343 (HFTP…FIDG).

This sequence belongs to the DNA polymerase HolA subunit family. The DNA polymerase III holoenzyme complex contains at least 10 different subunits organized into 3 functionally essential subassemblies: the Pol III core, the beta sliding clamp processivity factor and the clamp-loading complex. The Pol III core (subunits alpha, epsilon and theta) contains the polymerase and the 3'-5' exonuclease proofreading activities. The polymerase is tethered to the template via the dimeric beta sliding clamp processivity factor. The clamp-loading complex (also called gamma complex) assembles the beta sliding clamp onto the primed template and plays a central role in the organization and communication at the replication fork. The clamp-loading complex contains delta, delta', psi and chi, and 3 copies of either or both of two different DnaX proteins, gamma and tau. The DNA replisome complex has a single clamp loader (3 tau and 1 each of delta, delta', psi and chi subunits) which binds 3 Pol III cores (1 core on the leading strand and 2 on the lagging strand) each with a beta sliding clamp dimer. Additional proteins in the replisome are other copies of gamma, psi and chi, Ssb, DNA helicase and RNA primase. The clamp loader hydrolyzes ATP to assemble the beta processivity factor onto the primed template and plays a central role in the organization and communication at the replication fork; the minimal complex to load the beta sliding clamp on DNA is delta, delta', gamma.

It catalyses the reaction DNA(n) + a 2'-deoxyribonucleoside 5'-triphosphate = DNA(n+1) + diphosphate. In terms of biological role, part of the beta sliding clamp loading complex, which hydrolyzes ATP to load the beta clamp onto primed DNA to form the DNA replication pre-initiation complex. DNA polymerase III is a complex, multichain enzyme responsible for most of the replicative synthesis in bacteria. This DNA polymerase also exhibits 3'-5' exonuclease activity. The delta subunit is the wrench that will open the beta subunit dimer, which has been modeled to leave a gap large enough for ssDNA to pass through. The gamma complex (gamma(3),delta,delta') is thought to load beta dimers onto DNA by binding ATP which alters the complex's conformation so it can bind beta sliding clamp dimers and open them at one interface. Primed DNA is recognized, ATP is hydrolyzed releasing the gamma complex and closing the beta sliding clamp ring around the primed DNA. The polypeptide is DNA polymerase III subunit delta (holA) (Escherichia coli (strain K12)).